The following is a 379-amino-acid chain: Phospholipase A1 (379 aa).

The signal sequence occupies residues 1 to 20; the sequence is MKFITAILVIFCVYLLSTAG. A propeptide spanning residues 21–73 is cleaved from the precursor; that stretch reads DSKILPLKKLPSKIFGHLKSHVDNTVKKPLKVFGHLKSHVENSVGPLRMNKLT. An intrachain disulfide couples Cys-76 to Cys-154. Asn-126 is a glycosylation site (N-linked (GlcNAc...) asparagine). Ser-204 serves as the catalytic Nucleophile. Asp-232 acts as the Charge relay system in catalysis. 2 cysteine pairs are disulfide-bonded: Cys-243-Cys-248 and Cys-285-Cys-291. Catalysis depends on His-293, which acts as the Charge relay system.

This sequence belongs to the AB hydrolase superfamily. Lipase family. In terms of processing, contains five disulfide bonds. As to expression, expressed by the venom gland.

It localises to the secreted. It catalyses the reaction a 1,2-diacyl-sn-glycero-3-phosphocholine + H2O = a 2-acyl-sn-glycero-3-phosphocholine + a fatty acid + H(+). In terms of biological role, catalyzes the hydrolysis of phosphatidylcholine with phospholipase A1 activity. May act as an allergen and induce hemolytic activity. This chain is Phospholipase A1, found in Dinoponera quadriceps (South American ant).